We begin with the raw amino-acid sequence, 619 residues long: MSLDIAKYPTLALAENPEELRMLPKESLPKLCDELRQYLLTCVSRSSGHFASGLGVVELTVALHYVYNTPFDHLIWDVGHQAYPHKILTGRRDRISTIRQKDGLHPFPWRGESEYDVLSVGHSSTSISAGLGMAVAAEREGKGRRTVCVIGDGAITAGMAFEAMSHAGDIHSDMLVILNDNGMSISENVGGLNNHLAQLLSGKLYASLREGGKKAFSALPPIKDLLKRTEEHLKGMVVPSTLFEELGFNYIGPVDGHDVHTLTQTLKNMRDLKSPQLLHIMTKKGKGYAPAEKDPIGWHAVPKFDPASGTLPKSQSSLPTYSKIFGEWLCETAAKDSKLMAVTPAMREGSGMVRFSREYPQQYFDVAIAEQHAVTFAAGLAIGGYKPVVAIYSTFLQRAYDQLIHDVAIQNLPVLFAIDRGGLVGADGQTHQGAFDLSFMRCIPNMVIMAPSDENECRQMLYTGYHHNGPAAVRYPRGNGTSAVLEPLEMLPIGKGVLRREGEKIAILCFGTLLAQAQLAAENLNATLVDMRFVKPLDEELVLEMAAKHQVLVTVEENAIMGGAGSGVNELLMAKRRWVPVLNIGLPDLFVPQGEQDEMRSELGLDAAGIQRQIEAWLA.

Residues His80 and 121–123 (GHS) contribute to the thiamine diphosphate site. Asp152 is a Mg(2+) binding site. Thiamine diphosphate contacts are provided by residues 153–154 (GA), Asn181, Tyr288, and Glu370. Residue Asn181 coordinates Mg(2+).

Belongs to the transketolase family. DXPS subfamily. As to quaternary structure, homodimer. Requires Mg(2+) as cofactor. Thiamine diphosphate is required as a cofactor.

The catalysed reaction is D-glyceraldehyde 3-phosphate + pyruvate + H(+) = 1-deoxy-D-xylulose 5-phosphate + CO2. The protein operates within metabolic intermediate biosynthesis; 1-deoxy-D-xylulose 5-phosphate biosynthesis; 1-deoxy-D-xylulose 5-phosphate from D-glyceraldehyde 3-phosphate and pyruvate: step 1/1. Functionally, catalyzes the acyloin condensation reaction between C atoms 2 and 3 of pyruvate and glyceraldehyde 3-phosphate to yield 1-deoxy-D-xylulose-5-phosphate (DXP). In Yersinia pestis (strain Pestoides F), this protein is 1-deoxy-D-xylulose-5-phosphate synthase.